We begin with the raw amino-acid sequence, 197 residues long: MIPDEIPYKAVVNIENIVATVTLDQTLDLYAMERSVPNVEYDPDQFPGLIFRLESPKITSLIFKSGKMVVTGAKSTDELIKAVKRIIKTLKKYGMQLTGKPKIQIQNIVASANLHVIVNLDKAAFLLENNMYEPEQFPGLIYRMDEPRVVLLIFSSGKMVITGAKREDEVHKAVKKIFDKLVELDCVKPVEEEELEF.

2 repeat units span residues 14–90 (IENI…IKTL) and 105–181 (IQNI…FDKL).

This sequence belongs to the TBP family.

Functionally, general factor that plays a role in the activation of archaeal genes transcribed by RNA polymerase. Binds specifically to the TATA box promoter element which lies close to the position of transcription initiation. This Sulfolobus acidocaldarius (strain ATCC 33909 / DSM 639 / JCM 8929 / NBRC 15157 / NCIMB 11770) protein is TATA-box-binding protein (tbp).